Consider the following 89-residue polypeptide: Small ribosomal subunit protein uS15 (89 aa).

The protein belongs to the universal ribosomal protein uS15 family. As to quaternary structure, part of the 30S ribosomal subunit. Forms a bridge to the 50S subunit in the 70S ribosome, contacting the 23S rRNA.

In terms of biological role, one of the primary rRNA binding proteins, it binds directly to 16S rRNA where it helps nucleate assembly of the platform of the 30S subunit by binding and bridging several RNA helices of the 16S rRNA. Functionally, forms an intersubunit bridge (bridge B4) with the 23S rRNA of the 50S subunit in the ribosome. This chain is Small ribosomal subunit protein uS15, found in Nitrosococcus oceani (strain ATCC 19707 / BCRC 17464 / JCM 30415 / NCIMB 11848 / C-107).